The primary structure comprises 501 residues: Probable cytosol aminopeptidase (501 aa).

Mn(2+)-binding residues include Lys-267 and Asp-272. Residue Lys-279 is part of the active site. 3 residues coordinate Mn(2+): Asp-290, Asp-349, and Glu-351. Residue Arg-353 is part of the active site.

The protein belongs to the peptidase M17 family. Requires Mn(2+) as cofactor.

Its subcellular location is the cytoplasm. The enzyme catalyses Release of an N-terminal amino acid, Xaa-|-Yaa-, in which Xaa is preferably Leu, but may be other amino acids including Pro although not Arg or Lys, and Yaa may be Pro. Amino acid amides and methyl esters are also readily hydrolyzed, but rates on arylamides are exceedingly low.. It carries out the reaction Release of an N-terminal amino acid, preferentially leucine, but not glutamic or aspartic acids.. Its function is as follows. Presumably involved in the processing and regular turnover of intracellular proteins. Catalyzes the removal of unsubstituted N-terminal amino acids from various peptides. This is Probable cytosol aminopeptidase from Desulfovibrio desulfuricans (strain ATCC 27774 / DSM 6949 / MB).